The sequence spans 196 residues: NADH-quinone oxidoreductase subunit B (196 aa).

The [4Fe-4S] cluster site is built by Cys75, Cys76, Cys140, and Cys170.

It belongs to the complex I 20 kDa subunit family. As to quaternary structure, NDH-1 is composed of 14 different subunits. Subunits NuoB, C, D, E, F, and G constitute the peripheral sector of the complex. [4Fe-4S] cluster serves as cofactor.

The protein localises to the cell inner membrane. The enzyme catalyses a quinone + NADH + 5 H(+)(in) = a quinol + NAD(+) + 4 H(+)(out). NDH-1 shuttles electrons from NADH, via FMN and iron-sulfur (Fe-S) centers, to quinones in the respiratory chain. Couples the redox reaction to proton translocation (for every two electrons transferred, four hydrogen ions are translocated across the cytoplasmic membrane), and thus conserves the redox energy in a proton gradient. In Caulobacter sp. (strain K31), this protein is NADH-quinone oxidoreductase subunit B.